Reading from the N-terminus, the 809-residue chain is Spindle pole body component alp14 (809 aa).

HEAT repeat units follow at residues 127–164 (DSAAPVIESIIPSLSARSPKVIASNVAAIASLVEQFGA) and 167–204 (IPSKMIIPHISNLFGHADKNVRKEASRLTVNIYRWTGD). 3 disordered regions span residues 233–274 (PPKQ…SDDQ), 507–608 (AKAP…SGAL), and 619–638 (ELDDPAPQPAKHSRVDRYEH). The segment covering 239 to 253 (FLKSQQPTSEPNVET) has biased composition (polar residues). A compositionally biased stretch (acidic residues) spans 262–274 (ENEESEPEPSDDQ). Positions 509 to 518 (APTKKSKVKP) are enriched in basic residues. 2 stretches are compositionally biased toward low complexity: residues 526-551 (VVVPSNAKAVKKSVVPSSPVVPSPRK) and 582-595 (SRGLSRGTSSSLQQ). Phosphoserine occurs at positions 543 and 548. A compositionally biased stretch (polar residues) spans 597 to 608 (VKASTPLNSGAL). The stretch at 637 to 697 (EHPKVLEDND…NTLRSARKAS (61 aa)) forms a coiled coil. Phosphoserine is present on residues Ser697 and Ser720.

This sequence belongs to the TOG/XMAP215 family. In terms of assembly, interacts with alp14.

Its subcellular location is the cytoplasm. It is found in the cytoskeleton. It localises to the microtubule organizing center. The protein resides in the spindle pole body. The protein localises to the chromosome. Its subcellular location is the centromere. It is found in the kinetochore. Its function is as follows. Required for bipolar spindle formation and proper chromosome segregation. Has a role in connecting the kinetochores and the plus end of pole to chromosome microtubules. Also required for the activation of the spindle checkpoint pathway. This Schizosaccharomyces pombe (strain 972 / ATCC 24843) (Fission yeast) protein is Spindle pole body component alp14 (alp14).